The primary structure comprises 287 residues: Bifunctional protein FolD (287 aa).

NADP(+) is bound by residues 160–162 (GRS), Ser189, and Thr230.

This sequence belongs to the tetrahydrofolate dehydrogenase/cyclohydrolase family. As to quaternary structure, homodimer.

It carries out the reaction (6R)-5,10-methylene-5,6,7,8-tetrahydrofolate + NADP(+) = (6R)-5,10-methenyltetrahydrofolate + NADPH. The enzyme catalyses (6R)-5,10-methenyltetrahydrofolate + H2O = (6R)-10-formyltetrahydrofolate + H(+). It participates in one-carbon metabolism; tetrahydrofolate interconversion. Catalyzes the oxidation of 5,10-methylenetetrahydrofolate to 5,10-methenyltetrahydrofolate and then the hydrolysis of 5,10-methenyltetrahydrofolate to 10-formyltetrahydrofolate. The sequence is that of Bifunctional protein FolD from Chlamydia trachomatis serovar D (strain ATCC VR-885 / DSM 19411 / UW-3/Cx).